A 544-amino-acid chain; its full sequence is Membrane protein insertase YidC (544 aa).

5 helical membrane passes run 6-26 (NLLLIALLFVTFMLWQAWETD), 343-363 (KFLHGFIGNWGFSIIAITFIV), 418-438 (LGGCLPLVIQMPIFLALYYML), 456-476 (LSAQDPYYILPILMGVTMFFI), and 497-517 (PVIFTVFFLWFPSGLVMYYIV).

It belongs to the OXA1/ALB3/YidC family. Type 1 subfamily. As to quaternary structure, interacts with the Sec translocase complex via SecD. Specifically interacts with transmembrane segments of nascent integral membrane proteins during membrane integration.

It is found in the cell inner membrane. Functionally, required for the insertion and/or proper folding and/or complex formation of integral membrane proteins into the membrane. Involved in integration of membrane proteins that insert both dependently and independently of the Sec translocase complex, as well as at least some lipoproteins. Aids folding of multispanning membrane proteins. The protein is Membrane protein insertase YidC of Pectobacterium atrosepticum (strain SCRI 1043 / ATCC BAA-672) (Erwinia carotovora subsp. atroseptica).